A 241-amino-acid polypeptide reads, in one-letter code: MAPK phosphothreonine lyase (241 aa).

The active-site Proton donor is histidine 106. The Proton acceptor role is filled by lysine 136.

Belongs to the phosphothreonine lyase family.

It is found in the secreted. Functionally, secreted effector that irreversibly inactivates host MAP kinases by catalyzing the dephosphorylation of the phosphothreonine residue in the pT-X-pY motif present in MAPKs, via a beta-elimination reaction leading to a dehydrobutyrine residue. The chain is MAPK phosphothreonine lyase (spvC) from Salmonella enteritidis.